We begin with the raw amino-acid sequence, 260 residues long: Small ribosomal subunit protein cS22 (260 aa).

The transit peptide at 1 to 62 (MATISSILPC…TNPPLLKVRA (62 aa)) directs the protein to the chloroplast. A compositionally biased stretch (low complexity) spans 63–78 (VVTEETSSSSTASSSS). Residues 63–83 (VVTEETSSSSTASSSSDGEGA) form a disordered region. 2 consecutive RRM domains span residues 84–162 (RRLY…ITEK) and 184–260 (YKVY…VNKA).

Component of the chloroplast small ribosomal subunit (SSU). Mature 70S chloroplast ribosomes of higher plants consist of a small (30S) and a large (50S) subunit. The 30S small subunit contains 1 molecule of ribosomal RNA (16S rRNA) and 24 different proteins. The 50S large subunit contains 3 rRNA molecules (23S, 5S and 4.5S rRNA) and 33 different proteins.

Its subcellular location is the plastid. The protein localises to the chloroplast. Its function is as follows. Component of the chloroplast ribosome (chloro-ribosome), a dedicated translation machinery responsible for the synthesis of chloroplast genome-encoded proteins, including proteins of the transcription and translation machinery and components of the photosynthetic apparatus. cS22 may have a role in the recruitment of stored chloroplast mRNAs for active protein synthesis. In Spinacia oleracea (Spinach), this protein is Small ribosomal subunit protein cS22 (PSRP2).